Reading from the N-terminus, the 677-residue chain is UvrABC system protein B (677 aa).

Residues 25–412 form the Helicase ATP-binding domain; the sequence is DGVNSGREYQ…SGAIIEQVIR (388 aa). 38 to 45 is an ATP binding site; that stretch reads GATGTGKT. The short motif at 91–114 is the Beta-hairpin element; it reads YYDYYQPEAYVPVSDTYIAKTSSI. The Helicase C-terminal domain occupies 429 to 591; sequence QVEDLLDEIR…IVPMPAGKKA (163 aa). The UVR domain occupies 639–674; the sequence is PQLIDELETKMKKSAKDLDFENAAKLRDKIHQLRKK.

This sequence belongs to the UvrB family. Forms a heterotetramer with UvrA during the search for lesions. Interacts with UvrC in an incision complex.

The protein resides in the cytoplasm. Its function is as follows. The UvrABC repair system catalyzes the recognition and processing of DNA lesions. A damage recognition complex composed of 2 UvrA and 2 UvrB subunits scans DNA for abnormalities. Upon binding of the UvrA(2)B(2) complex to a putative damaged site, the DNA wraps around one UvrB monomer. DNA wrap is dependent on ATP binding by UvrB and probably causes local melting of the DNA helix, facilitating insertion of UvrB beta-hairpin between the DNA strands. Then UvrB probes one DNA strand for the presence of a lesion. If a lesion is found the UvrA subunits dissociate and the UvrB-DNA preincision complex is formed. This complex is subsequently bound by UvrC and the second UvrB is released. If no lesion is found, the DNA wraps around the other UvrB subunit that will check the other stand for damage. This Prochlorococcus marinus (strain SARG / CCMP1375 / SS120) protein is UvrABC system protein B.